Here is a 513-residue protein sequence, read N- to C-terminus: Glutamyl-tRNA(Gln) amidotransferase subunit A (513 aa).

Catalysis depends on charge relay system residues lysine 85 and serine 160. The active-site Acyl-ester intermediate is the serine 184.

It belongs to the amidase family. GatA subfamily. Heterotrimer of A, B and C subunits.

It catalyses the reaction L-glutamyl-tRNA(Gln) + L-glutamine + ATP + H2O = L-glutaminyl-tRNA(Gln) + L-glutamate + ADP + phosphate + H(+). Its function is as follows. Allows the formation of correctly charged Gln-tRNA(Gln) through the transamidation of misacylated Glu-tRNA(Gln) in organisms which lack glutaminyl-tRNA synthetase. The reaction takes place in the presence of glutamine and ATP through an activated gamma-phospho-Glu-tRNA(Gln). This Bifidobacterium longum subsp. infantis (strain ATCC 15697 / DSM 20088 / JCM 1222 / NCTC 11817 / S12) protein is Glutamyl-tRNA(Gln) amidotransferase subunit A.